The primary structure comprises 515 residues: MDEFHRYGKEDNSRQQCFLYPLFFQEDLYAISHDHYLDGSSSSEPMEHLSSNDQFSFLTVKRLIGQIRQQNHSIVLFVNCAPNPLADCKKSSYSESVLEGLTLVLEVPFSIRSKYSVEGMNEWKSFRSIHSIFPFLEDKFPHSNYISDARIPYSIHPEILVRTFRRLIRDAPSLHPLRSVLYEYRNSPENLQRSIIVVPRVNTRFFLFLWNYYVYECESILFSLLKRSSHSRSLSHRPFPQRTHFHRKIKHIIIFSRRNSLKSIWLLKDPKINYVRYGERSIIAIKGTHLLVKKCRYYLLLFRQCYFHLWSEPYRVCSHQLSKNCSSSPGYFLRVRMNPLFVRTKMLDELFIADLITNEFDPIVPIVPILGLLAREKFCDVSGRPISKLSWTNLTDDDILNRFDQIWRNLFHYYSGSFGRDGLYRIKYILSLSCAKTLACKHKSTIRVVRKELGPELFQKSFSKEREFDSLPFSSKAAARSQRERIWHSDIPQINPLVNSWQKIQDLKIENLFDQ.

The protein belongs to the intron maturase 2 family. MatK subfamily.

The protein localises to the plastid. The protein resides in the chloroplast. Usually encoded in the trnK tRNA gene intron. Probably assists in splicing its own and other chloroplast group II introns. The protein is Maturase K of Pinus koraiensis (Korean pine).